The following is a 95-amino-acid chain: MRKLLAVFSKGRWKMEQKLQEQLDGLLEKYTELLLGETNDELKEEVKQWILYTHIAKSMPPLAKHWNATYPDAKQGIKEIIQHIKELNEAHRNKQ.

Positions 14-50 (KMEQKLQEQLDGLLEKYTELLLGETNDELKEEVKQWI) form a coiled coil.

This is an uncharacterized protein from Bacillus subtilis (strain 168).